Consider the following 837-residue polypeptide: Ubiquitin carboxyl-terminal hydrolase A (837 aa).

The segment at proline 166–proline 277 adopts a UBP-type; degenerate zinc-finger fold. The USP domain occupies threonine 319–glutamine 835. Catalysis depends on cysteine 328, which acts as the Nucleophile. Residues serine 628–histidine 669 form the UBA 1 domain. Residues aspartate 676–asparagine 695 are disordered. Low complexity predominate over residues asparagine 683–asparagine 695. The 41-residue stretch at valine 700–histidine 740 folds into the UBA 2 domain. The active-site Proton acceptor is the histidine 797.

This sequence belongs to the peptidase C19 family.

The catalysed reaction is Thiol-dependent hydrolysis of ester, thioester, amide, peptide and isopeptide bonds formed by the C-terminal Gly of ubiquitin (a 76-residue protein attached to proteins as an intracellular targeting signal).. Functionally, required for development but not growth. In Dictyostelium discoideum (Social amoeba), this protein is Ubiquitin carboxyl-terminal hydrolase A (ubpA).